A 1070-amino-acid chain; its full sequence is DNA-directed RNA polymerase subunit beta (1070 aa).

The protein belongs to the RNA polymerase beta chain family. In plastids the minimal PEP RNA polymerase catalytic core is composed of four subunits: alpha, beta, beta', and beta''. When a (nuclear-encoded) sigma factor is associated with the core the holoenzyme is formed, which can initiate transcription.

The protein localises to the plastid. The protein resides in the chloroplast. It carries out the reaction RNA(n) + a ribonucleoside 5'-triphosphate = RNA(n+1) + diphosphate. In terms of biological role, DNA-dependent RNA polymerase catalyzes the transcription of DNA into RNA using the four ribonucleoside triphosphates as substrates. This Platanus occidentalis (Sycamore) protein is DNA-directed RNA polymerase subunit beta.